The chain runs to 222 residues: Phosphoribosylformylglycinamidine synthase subunit PurQ (222 aa).

The 220-residue stretch at 3–222 (SAVIQLPGLN…LFESVLGRAA (220 aa)) folds into the Glutamine amidotransferase type-1 domain. Catalysis depends on Cys-86, which acts as the Nucleophile. Residues His-196 and Glu-198 contribute to the active site.

As to quaternary structure, part of the FGAM synthase complex composed of 1 PurL, 1 PurQ and 2 PurS subunits.

The protein localises to the cytoplasm. It carries out the reaction N(2)-formyl-N(1)-(5-phospho-beta-D-ribosyl)glycinamide + L-glutamine + ATP + H2O = 2-formamido-N(1)-(5-O-phospho-beta-D-ribosyl)acetamidine + L-glutamate + ADP + phosphate + H(+). It catalyses the reaction L-glutamine + H2O = L-glutamate + NH4(+). Its pathway is purine metabolism; IMP biosynthesis via de novo pathway; 5-amino-1-(5-phospho-D-ribosyl)imidazole from N(2)-formyl-N(1)-(5-phospho-D-ribosyl)glycinamide: step 1/2. In terms of biological role, part of the phosphoribosylformylglycinamidine synthase complex involved in the purines biosynthetic pathway. Catalyzes the ATP-dependent conversion of formylglycinamide ribonucleotide (FGAR) and glutamine to yield formylglycinamidine ribonucleotide (FGAM) and glutamate. The FGAM synthase complex is composed of three subunits. PurQ produces an ammonia molecule by converting glutamine to glutamate. PurL transfers the ammonia molecule to FGAR to form FGAM in an ATP-dependent manner. PurS interacts with PurQ and PurL and is thought to assist in the transfer of the ammonia molecule from PurQ to PurL. The polypeptide is Phosphoribosylformylglycinamidine synthase subunit PurQ (Chelativorans sp. (strain BNC1)).